Here is a 490-residue protein sequence, read N- to C-terminus: Delta(14)-sterol reductase (490 aa).

The next 7 helical transmembrane spans lie at 23 to 43 (FGGP…VHVF), 80 to 100 (VFGL…ALSL), 136 to 156 (LAIL…WTFI), 160 to 180 (FAQI…FVYV), 230 to 250 (EFME…AFIA), 255 to 275 (LYGY…FYVF), and 324 to 344 (QLGA…YSIF). NADP(+) is bound by residues lysine 351, arginine 355, isoleucine 378, tryptophan 383, and 390–391 (NY). The chain crosses the membrane as a helical span at residues 436 to 456 (ARGWGIVFTYFYILYFAILLI). NADP(+)-binding positions include aspartate 462, 466–470 (CSKKY), and tyrosine 477.

Belongs to the ERG4/ERG24 family.

It localises to the membrane. It catalyses the reaction 4,4-dimethyl-5alpha-cholesta-8,24-dien-3beta-ol + NADP(+) = 4,4-dimethyl-5alpha-cholesta-8,14,24-trien-3beta-ol + NADPH + H(+). Its pathway is steroid biosynthesis; zymosterol biosynthesis; zymosterol from lanosterol: step 2/6. Reduces the C14=C15 double bond of 4,4-dimethyl-cholesta-8,14,24-trienol to produce 4,4-dimethyl-cholesta-8,24-dienol. This Neurospora crassa (strain ATCC 24698 / 74-OR23-1A / CBS 708.71 / DSM 1257 / FGSC 987) protein is Delta(14)-sterol reductase (erg-3).